The primary structure comprises 205 residues: uncharacterized protein (205 aa).

Residues 1 to 25 show a composition bias toward polar residues; it reads MSNNNNEAQQPVESTNVESQQNVVQ. Residues 1 to 205 are disordered; it reads MSNNNNEAQQ…TSDPAQQVEA (205 aa). The segment covering 32 to 79 has biased composition (low complexity); the sequence is NENNDNNNNNNNNNNNNNNNNNNNNNNNNSNNNNNSSNNENNENNENN. The span at 80 to 122 shows a compositional bias: basic and acidic residues; that stretch reads SCEKSEQEKPKEPEEPVQEEKSKEPCDQQKVKENEPAEEKETE. Composition is skewed to low complexity over residues 123–132 and 146–162; these read PAAPVEPENP and QHQQ…NGES. The segment covering 170 to 185 has biased composition (basic and acidic residues); sequence SENKKRSIDEAGDIKD. Polar residues predominate over residues 194–205; it reads VETSDPAQQVEA.

This is an uncharacterized protein from Dictyostelium discoideum (Social amoeba).